The chain runs to 126 residues: Cornifin alpha (126 aa).

Serine 2 carries the post-translational modification N-acetylserine. Tandem repeats lie at residues 3 to 14, 18 to 29, 31 to 38, 39 to 46, 47 to 54, 55 to 62, 63 to 70, 71 to 78, 79 to 86, 87 to 94, 95 to 102, 103 to 110, and 111 to 118. A 2 X 12 AA approximate repeats region spans residues 3 to 29; it reads SQQQKQPCTLPPQLQQHQVKQPCQPPP. The segment at 20-43 is disordered; the sequence is QVKQPCQPPPQEPCVPKTKEPCQP. Residues 31–122 are 11 X 8 AA approximate tandem repeats; sequence EPCVPKTKEP…CQPKVPEPCQ (92 aa). Residues 104-126 form a disordered region; sequence PCQSKVPQPCQPKVPEPCQTKQK.

This sequence belongs to the cornifin (SPRR) family. In terms of tissue distribution, suprabasal layers of squamous-differentiated tissues such as epidermis, esophagus, tongue and trachea.

The protein localises to the cytoplasm. In terms of biological role, cross-linked envelope protein of keratinocytes. It is a keratinocyte protein that first appears in the cell cytosol, but ultimately becomes cross-linked to membrane proteins by transglutaminase. All that results in the formation of an insoluble envelope beneath the plasma membrane. The sequence is that of Cornifin alpha from Oryctolagus cuniculus (Rabbit).